Consider the following 245-residue polypeptide: MDKNELVQKAKLAEQAERYDDMAACMKSVTEQGAELSNEERNLLSVAYKNVVGARRSSWRVVSSIEQKTEGAEKKQQMAREYREKIETELRDICNDVLSLLEKFLIPNRSQPESKVFYLKMKGDYYRYLAEVAAGDDKKGIVDQSQQAYQEAFEISKKEMQPTHPIRLGLALNFSVFYYEILNSPEKACSLAKTAFDEAIAELDTLSEESYKDSTLIMQLLRDNLTLWTSDTQGDEAEAGEGGEN.

Position 1 is an N-acetylmethionine (methionine 1). An N6-acetyllysine modification is found at lysine 3. Position 58 is a phosphoserine; by PKA (serine 58). Position 68 is an N6-acetyllysine (lysine 68). 3 positions are modified to phosphoserine: serine 184, serine 207, and serine 210. Position 232 is a phosphothreonine; by CK1 (threonine 232).

The protein belongs to the 14-3-3 family. As to quaternary structure, interacts with CDK16 and BSPRY. Interacts with WEE1 (C-terminal). Interacts with SAMSN1. Interacts with MLF1 (phosphorylated form); the interaction retains it in the cytoplasm. Interacts with Thr-phosphorylated ITGB2. Interacts with BCL2L11. Homodimer. Heterodimerizes with YWHAE. Homo- and heterodimerization is inhibited by phosphorylation on Ser-58. Interacts with FOXO4, NOXA1, SSH1 and ARHGEF2. Interacts with Pseudomonas aeruginosa exoS (unphosphorylated form). Interacts with BAX; the interaction occurs in the cytoplasm. Under stress conditions, MAPK8-mediated phosphorylation releases BAX to mitochondria. Interacts with phosphorylated RAF1; the interaction is inhibited when YWHAZ is phosphorylated on Thr-232. Interacts with TP53; the interaction enhances p53 transcriptional activity. The Ser-58 phosphorylated form inhibits this interaction and p53 transcriptional activity. Interacts with ABL1 (phosphorylated form); the interaction retains ABL1 in the cytoplasm. Interacts with PKA-phosphorylated AANAT; the interaction modulates AANAT enzymatic activity by increasing affinity for arylalkylamines and acetyl-CoA and protecting the enzyme from dephosphorylation and proteasomal degradation. It may also prevent thiol-dependent inactivation. Interacts with AKT1; the interaction phosphorylates YWHAZ and modulates dimerization. Interacts with GAB2 and TLK2. Interacts with the 'Thr-369' phosphorylated form of DAPK2. Interacts with PI4KB, TBC1D22A and TBC1D22B. Interacts with ZFP36L1 (via phosphorylated form); this interaction occurs in a p38 MAPK- and AKT-signaling pathways. Interacts with SLITRK1. Interacts with AK5, LDB1, MADD, MARK3, PDE1A and SMARCB1. Interacts with YWHAZ. Interacts with MEFV. Interacts with ADAM22 (via C-terminus). Post-translationally, the delta, brain-specific form differs from the zeta form in being phosphorylated. Phosphorylation on Ser-184 by MAPK8; promotes dissociation of BAX and translocation of BAX to mitochondria. Phosphorylation on Thr-232; inhibits binding of RAF1. Phosphorylated on Ser-58 by PKA and protein kinase C delta type catalytic subunit in a sphingosine-dependent fashion. Phosphorylation on Ser-58 by PKA; disrupts homodimerization and heterodimerization with YHAE and TP53. Highly expressed in brain (at protein level).

Its subcellular location is the cytoplasm. It is found in the melanosome. In terms of biological role, adapter protein implicated in the regulation of a large spectrum of both general and specialized signaling pathways. Binds to a large number of partners, usually by recognition of a phosphoserine or phosphothreonine motif. Binding generally results in the modulation of the activity of the binding partner. Promotes cytosolic retention and inactivation of TFEB transcription factor by binding to phosphorylated TFEB. Induces ARHGEF7 activity on RAC1 as well as lamellipodia and membrane ruffle formation. In neurons, regulates spine maturation through the modulation of ARHGEF7 activity. This chain is 14-3-3 protein zeta/delta (YWHAZ), found in Ovis aries (Sheep).